The chain runs to 236 residues: Purine nucleoside phosphorylase DeoD-type (236 aa).

His5 contributes to the a purine D-ribonucleoside binding site. Residues Gly21, Arg25, Arg44, and 88-91 each bind phosphate; that span reads RVGS. Residues 180–182 and 204–205 contribute to the a purine D-ribonucleoside site; these read DME and SD. Asp205 serves as the catalytic Proton donor.

Belongs to the PNP/UDP phosphorylase family. Homohexamer; trimer of homodimers.

The catalysed reaction is a purine D-ribonucleoside + phosphate = a purine nucleobase + alpha-D-ribose 1-phosphate. The enzyme catalyses a purine 2'-deoxy-D-ribonucleoside + phosphate = a purine nucleobase + 2-deoxy-alpha-D-ribose 1-phosphate. Its function is as follows. Catalyzes the reversible phosphorolytic breakdown of the N-glycosidic bond in the beta-(deoxy)ribonucleoside molecules, with the formation of the corresponding free purine bases and pentose-1-phosphate. The chain is Purine nucleoside phosphorylase DeoD-type from Aliivibrio salmonicida (strain LFI1238) (Vibrio salmonicida (strain LFI1238)).